The sequence spans 213 residues: Thiamine-phosphate synthase (213 aa).

4-amino-2-methyl-5-(diphosphooxymethyl)pyrimidine contacts are provided by residues 42–46 (QYREK) and Asp77. Residues Asp78 and Asp97 each coordinate Mg(2+). Ser116 lines the 4-amino-2-methyl-5-(diphosphooxymethyl)pyrimidine pocket. 142–144 (TIS) contributes to the 2-[(2R,5Z)-2-carboxy-4-methylthiazol-5(2H)-ylidene]ethyl phosphate binding site. Lys145 provides a ligand contact to 4-amino-2-methyl-5-(diphosphooxymethyl)pyrimidine. 2-[(2R,5Z)-2-carboxy-4-methylthiazol-5(2H)-ylidene]ethyl phosphate-binding positions include Gly173 and 193 to 194 (IS).

Belongs to the thiamine-phosphate synthase family. It depends on Mg(2+) as a cofactor.

The enzyme catalyses 2-[(2R,5Z)-2-carboxy-4-methylthiazol-5(2H)-ylidene]ethyl phosphate + 4-amino-2-methyl-5-(diphosphooxymethyl)pyrimidine + 2 H(+) = thiamine phosphate + CO2 + diphosphate. It carries out the reaction 2-(2-carboxy-4-methylthiazol-5-yl)ethyl phosphate + 4-amino-2-methyl-5-(diphosphooxymethyl)pyrimidine + 2 H(+) = thiamine phosphate + CO2 + diphosphate. The catalysed reaction is 4-methyl-5-(2-phosphooxyethyl)-thiazole + 4-amino-2-methyl-5-(diphosphooxymethyl)pyrimidine + H(+) = thiamine phosphate + diphosphate. Its pathway is cofactor biosynthesis; thiamine diphosphate biosynthesis; thiamine phosphate from 4-amino-2-methyl-5-diphosphomethylpyrimidine and 4-methyl-5-(2-phosphoethyl)-thiazole: step 1/1. Condenses 4-methyl-5-(beta-hydroxyethyl)thiazole monophosphate (THZ-P) and 2-methyl-4-amino-5-hydroxymethyl pyrimidine pyrophosphate (HMP-PP) to form thiamine monophosphate (TMP). This is Thiamine-phosphate synthase from Limosilactobacillus fermentum (strain NBRC 3956 / LMG 18251) (Lactobacillus fermentum).